A 603-amino-acid chain; its full sequence is Sulfoacetaldehyde acetyltransferase (603 aa).

Belongs to the TPP enzyme family. Mg(2+) serves as cofactor. Requires thiamine diphosphate as cofactor.

The catalysed reaction is acetyl phosphate + sulfite + H(+) = sulfoacetaldehyde + phosphate. Its function is as follows. Catalyzes the degradation of sulfoacetaldehyde into sulfite and acetyl phosphate. Involved in sulfolactate degradation. This is Sulfoacetaldehyde acetyltransferase from Roseovarius nubinhibens (strain ATCC BAA-591 / DSM 15170 / ISM).